Here is a 473-residue protein sequence, read N- to C-terminus: Photosystem II CP43 reaction center protein (473 aa).

Residues 1 to 14 (MKTLYSLRRSYPVE) constitute a propeptide that is removed on maturation. Threonine 15 is subject to N-acetylthreonine. Phosphothreonine is present on threonine 15. 5 helical membrane-spanning segments follow: residues 69 to 93 (LFEV…PHLA), 134 to 155 (LIGP…KDRN), 178 to 200 (KALY…RKIT), 255 to 275 (KPFA…LSYS), and 291 to 312 (WFNN…ASQA). A [CaMn4O5] cluster-binding site is contributed by glutamate 367. Residues 447-471 (RARAAAAGFEKGIDRDFEPVLSMTP) form a helical membrane-spanning segment.

Belongs to the PsbB/PsbC family. PsbC subfamily. PSII is composed of 1 copy each of membrane proteins PsbA, PsbB, PsbC, PsbD, PsbE, PsbF, PsbH, PsbI, PsbJ, PsbK, PsbL, PsbM, PsbT, PsbX, PsbY, PsbZ, Psb30/Ycf12, at least 3 peripheral proteins of the oxygen-evolving complex and a large number of cofactors. It forms dimeric complexes. Binds multiple chlorophylls and provides some of the ligands for the Ca-4Mn-5O cluster of the oxygen-evolving complex. It may also provide a ligand for a Cl- that is required for oxygen evolution. PSII binds additional chlorophylls, carotenoids and specific lipids. is required as a cofactor.

The protein localises to the plastid. It localises to the chloroplast thylakoid membrane. In terms of biological role, one of the components of the core complex of photosystem II (PSII). It binds chlorophyll and helps catalyze the primary light-induced photochemical processes of PSII. PSII is a light-driven water:plastoquinone oxidoreductase, using light energy to abstract electrons from H(2)O, generating O(2) and a proton gradient subsequently used for ATP formation. This chain is Photosystem II CP43 reaction center protein, found in Pinus thunbergii (Japanese black pine).